We begin with the raw amino-acid sequence, 35 residues long: Toxin Ado1 (35 aa).

3 cysteine pairs are disulfide-bonded: C5–C20, C12–C25, and C19–C32.

It localises to the secreted. Binds reversibly and blocks P/Q-type voltage-gated calcium channels (Cav). The sequence is that of Toxin Ado1 from Agriosphodrus dohrni (Japanese assassin-bug).